Reading from the N-terminus, the 151-residue chain is Transcriptional repressor NrdR (151 aa).

The segment at 3 to 34 (CPFCNSVDTSVKNSRPSDCKMSVRRRRSCDSC) is a zinc-finger region. In terms of domain architecture, ATP-cone spans 49–139 (VKVLKKDGSV…VYMNFSDVND (91 aa)).

It belongs to the NrdR family. It depends on Zn(2+) as a cofactor.

Functionally, negatively regulates transcription of bacterial ribonucleotide reductase nrd genes and operons by binding to NrdR-boxes. In Anaplasma marginale (strain Florida), this protein is Transcriptional repressor NrdR.